Consider the following 690-residue polypeptide: Protein arginine N-methyltransferase 7 (690 aa).

SAM-dependent MTase PRMT-type domains follow at residues 14 to 357 (QNSW…YSLW) and 366 to 690 (TKSV…QKKL).

Belongs to the class I-like SAM-binding methyltransferase superfamily. Protein arginine N-methyltransferase family. PRMT7 subfamily. Expressed at low level in ovary.

Essential arginine methyltransferase that can both catalyze the formation of omega-N monomethylarginine (MMA) and symmetrical dimethylarginine (sDMA). Specifically mediates the symmetrical dimethylation of arginine residues in the small nuclear ribonucleoproteins SmD1 and SmD3. This chain is Protein arginine N-methyltransferase 7 (Art7), found in Drosophila melanogaster (Fruit fly).